The primary structure comprises 1463 residues: Probable ATP-dependent RNA helicase spindle-E (1463 aa).

The Helicase ATP-binding domain maps to Leu131–Phe296. Gly144–Thr151 is an ATP binding site. The DEAH box signature appears at Asp243–His246. Positions Val348–Asp531 constitute a Helicase C-terminal domain. In terms of domain architecture, Tudor spans Ala951–Phe1016.

This sequence belongs to the DEAD box helicase family. DEAH subfamily.

Its subcellular location is the cytoplasm. It carries out the reaction ATP + H2O = ADP + phosphate + H(+). Probable ATP-binding RNA helicase which plays a central role during gametogenesis by repressing transposable elements and preventing their mobilization, which is essential for the germline integrity. Acts via the piRNA metabolic process, which mediates the repression of transposable elements during meiosis by forming complexes composed of piRNAs and Piwi proteins and govern the methylation and subsequent repression of transposons. This Anopheles gambiae (African malaria mosquito) protein is Probable ATP-dependent RNA helicase spindle-E (spn-E).